The following is a 402-amino-acid chain: Acetylornithine aminotransferase (402 aa).

Pyridoxal 5'-phosphate-binding positions include 117–118 (GA) and phenylalanine 143. Arginine 146 contributes to the N(2)-acetyl-L-ornithine binding site. 231–234 (DEVQ) serves as a coordination point for pyridoxal 5'-phosphate. An N6-(pyridoxal phosphate)lysine modification is found at lysine 260. Residue threonine 288 participates in N(2)-acetyl-L-ornithine binding. Residue threonine 289 participates in pyridoxal 5'-phosphate binding.

The protein belongs to the class-III pyridoxal-phosphate-dependent aminotransferase family. ArgD subfamily. As to quaternary structure, homodimer. Pyridoxal 5'-phosphate serves as cofactor.

The protein localises to the cytoplasm. The enzyme catalyses N(2)-acetyl-L-ornithine + 2-oxoglutarate = N-acetyl-L-glutamate 5-semialdehyde + L-glutamate. The protein operates within amino-acid biosynthesis; L-arginine biosynthesis; N(2)-acetyl-L-ornithine from L-glutamate: step 4/4. In Corynebacterium efficiens (strain DSM 44549 / YS-314 / AJ 12310 / JCM 11189 / NBRC 100395), this protein is Acetylornithine aminotransferase.